Here is a 503-residue protein sequence, read N- to C-terminus: Drimenol monooxygenase (503 aa).

The helical transmembrane segment at 7–23 threads the bilayer; it reads MICIVVSGLLLYSSRTS. Serine 471 provides a ligand contact to heme.

It belongs to the cytochrome P450 family. It depends on heme as a cofactor.

The protein resides in the membrane. It catalyses the reaction (5S,9S,10S)-drim-7-en-11-ol + reduced [NADPH--hemoprotein reductase] + O2 = (5S,10S)-(9R)-7-drimene-11,12-diol + oxidized [NADPH--hemoprotein reductase] + H2O + H(+). Functionally, catalyzes the conversion of drimenol to drimendiol, a precursor of the sesquiterpenoid polygodial. Polygodial has been shown to be an antifeedant for a number of herbivorous insects. This is Drimenol monooxygenase from Persicaria hydropiper (Marshpepper knotweed).